The following is a 535-amino-acid chain: MDIGVHVLGSVTSNENESLGLKELIGTKQDRSGFIGEDCLQRSLKLARTTTRAEEEENLSSSVAAAYCKTMSFHQGIPLMRSASPLSSDSRRQEQMLSFSDKPDALDFSKYVGLDNSSNNKNSLSPFLHQIPPPSYFRSSGGYGSGGMMMNMSMQGNFTGVKGPFTLTQWAELEQQALIYKYITANVPVPSSLLISIKKSFYPYGSLPPSSFGWGTFHLGFAGGNMDPEPGRCRRTDGKKWRCSRDAVPDQKYCERHINRGRHRSRKPVEVQSGQNQTAAAASKAVTTPQQPVVAGNTNRSNARASSNRSLAIGSQYINPSTESLPNNRGVSIYPSTVNLQPKESPVIHQKHRNNNNPFEFGHISSDSLLNPNTAKTYGSSFLDFSSNQEKHSGNHNHNSWPEELTSDWTQLSMSIPIASSSPSSTHNNNNAQEKTTLSPLRLSRELDLSIQTDETTIEPTVKKVNTWIPISWGNSLGGPLGEVLNSTTNSPTFGSSPTGVLQKSTFCSLSNNSSVSSPIAENNRHNGDYFHYTT.

The QLQ domain occupies 164-199 (PFTLTQWAELEQQALIYKYITANVPVPSSLLISIKK). The WRC domain maps to 227-271 (DPEPGRCRRTDGKKWRCSRDAVPDQKYCERHINRGRHRSRKPVEV). Short sequence motifs (bipartite nuclear localization signal) lie at residues 232–242 (RCRRTDGKKWR) and 260–267 (RGRHRSRK). Disordered stretches follow at residues 260 to 308 (RGRH…ASSN), 417 to 437 (PIAS…EKTT), and 514 to 535 (SSVS…HYTT). Over residues 272–291 (QSGQNQTAAAASKAVTTPQQ) the composition is skewed to polar residues. Positions 299 to 308 (NRSNARASSN) are enriched in low complexity. Over residues 426–437 (THNNNNAQEKTT) the composition is skewed to polar residues.

This sequence belongs to the GRF family. Interacts with GIF1. Strongly expressed in actively growing and developing tissues, such as roots, upper stems, and shoot tips containing the shoot apical meristem (SAM) and flower buds. Detected in young leaf primordium. Also expressed in mature flowers, but weakly expressed in mature stems and leaves.

The protein localises to the nucleus. In terms of biological role, transcription activator that plays a role in the regulation of cell expansion in leaf and cotyledons tissues. Component of a network formed by miR396, the GRFs and their interacting factors (GIFs) acting in the regulation of meristem function, at least partially through the control of cell proliferation. This is Growth-regulating factor 2 (GRF2) from Arabidopsis thaliana (Mouse-ear cress).